Consider the following 540-residue polypeptide: Threonine--tRNA ligase catalytic subunit (540 aa).

Residues 134 to 428 (DHRIIGERLD…LLEHFRGKLP (295 aa)) form a catalytic region. The Zn(2+) site is built by C226, H277, and H405.

Belongs to the class-II aminoacyl-tRNA synthetase family. Homodimer. Probably interacts with its editing subunit. Requires Zn(2+) as cofactor.

Its subcellular location is the cytoplasm. It carries out the reaction tRNA(Thr) + L-threonine + ATP = L-threonyl-tRNA(Thr) + AMP + diphosphate + H(+). In terms of biological role, catalyzes the attachment of threonine to tRNA(Thr) in a two-step reaction: L-threonine is first activated by ATP to form Thr-AMP and then transferred to the acceptor end of tRNA(Thr). Also activates L-serine and transfers it to tRNA(Thr) but cannot deacylate incorrectly charged amino acid; unlike most archaea the editing function is found in a freestanding protein. The polypeptide is Threonine--tRNA ligase catalytic subunit (Sulfurisphaera tokodaii (strain DSM 16993 / JCM 10545 / NBRC 100140 / 7) (Sulfolobus tokodaii)).